A 222-amino-acid chain; its full sequence is Probable GTP-binding protein EngB (222 aa).

The region spanning 27–202 (TGIEVAFAGR…AKKLDEWFLG (176 aa)) is the EngB-type G domain. GTP contacts are provided by residues 35–42 (GRSNAGKS), 61–65 (GRTQL), 81–84 (DLPG), 148–151 (TKAD), and 181–183 (FSS). Mg(2+) contacts are provided by Ser-42 and Thr-63.

This sequence belongs to the TRAFAC class TrmE-Era-EngA-EngB-Septin-like GTPase superfamily. EngB GTPase family. Requires Mg(2+) as cofactor.

Functionally, necessary for normal cell division and for the maintenance of normal septation. The chain is Probable GTP-binding protein EngB from Pseudoalteromonas translucida (strain TAC 125).